The primary structure comprises 314 residues: Dihydroorotate dehydrogenase (fumarate) (314 aa).

Residues Lys-46, 70–74 (NSMGL), and Asn-130 contribute to the substrate site. 46–47 (KS) lines the FMN pocket. Asn-130 contributes to the FMN binding site. Active-site nucleophile residues include Ser-132 and Cys-133. Lys-167 and Ile-195 together coordinate FMN. 196-197 (NS) serves as a coordination point for substrate. Residues Gly-224, 252–253 (GG), and 274–275 (GT) contribute to the FMN site.

This sequence belongs to the dihydroorotate dehydrogenase family. Type 1 subfamily. Homodimer. Requires FMN as cofactor.

It localises to the cytoplasm. The enzyme catalyses (S)-dihydroorotate + fumarate = orotate + succinate. The protein operates within pyrimidine metabolism; UMP biosynthesis via de novo pathway. With respect to regulation, the activity is independent of the presence of oxygen. In terms of biological role, catalyzes the conversion of dihydroorotate to orotate with fumarate as the electron acceptor. In Lachancea kluyveri (strain ATCC 58438 / CBS 3082 / BCRC 21498 / NBRC 1685 / JCM 7257 / NCYC 543 / NRRL Y-12651) (Yeast), this protein is Dihydroorotate dehydrogenase (fumarate) (URA1).